Here is a 397-residue protein sequence, read N- to C-terminus: Ribosomal RNA large subunit methyltransferase I (397 aa).

The 78-residue stretch at 2–79 (TAAIYLVKGR…KEEINKAFFV (78 aa)) folds into the PUA domain.

Belongs to the methyltransferase superfamily. RlmI family.

It localises to the cytoplasm. It carries out the reaction cytidine(1962) in 23S rRNA + S-adenosyl-L-methionine = 5-methylcytidine(1962) in 23S rRNA + S-adenosyl-L-homocysteine + H(+). Specifically methylates the cytosine at position 1962 (m5C1962) of 23S rRNA. The sequence is that of Ribosomal RNA large subunit methyltransferase I from Vibrio parahaemolyticus serotype O3:K6 (strain RIMD 2210633).